The chain runs to 142 residues: Large ribosomal subunit protein bL17 (142 aa).

The protein belongs to the bacterial ribosomal protein bL17 family. In terms of assembly, part of the 50S ribosomal subunit. Contacts protein L32.

This is Large ribosomal subunit protein bL17 from Chlamydia caviae (strain ATCC VR-813 / DSM 19441 / 03DC25 / GPIC) (Chlamydophila caviae).